A 306-amino-acid chain; its full sequence is Homoserine O-succinyltransferase (306 aa).

Cys142 functions as the Acyl-thioester intermediate in the catalytic mechanism. The substrate site is built by Lys163 and Ser192. His233 functions as the Proton acceptor in the catalytic mechanism. Residue Glu235 is part of the active site. A substrate-binding site is contributed by Arg247.

This sequence belongs to the MetA family.

The protein localises to the cytoplasm. It catalyses the reaction L-homoserine + succinyl-CoA = O-succinyl-L-homoserine + CoA. Its pathway is amino-acid biosynthesis; L-methionine biosynthesis via de novo pathway; O-succinyl-L-homoserine from L-homoserine: step 1/1. Transfers a succinyl group from succinyl-CoA to L-homoserine, forming succinyl-L-homoserine. This chain is Homoserine O-succinyltransferase, found in Pelagibacterium halotolerans (strain DSM 22347 / JCM 15775 / CGMCC 1.7692 / B2).